The chain runs to 438 residues: Vasoactive intestinal polypeptide receptor 2 (438 aa).

A signal peptide spans 1–23 (MRTLLPPALLTCWLLAPVNSIHP). At 24-124 (ECRFHLEIQE…EDESKITFYI (101 aa)) the chain is on the extracellular side. 3 cysteine pairs are disulfide-bonded: C38-C61, C52-C93, and C75-C109. N58, N88, and N92 each carry an N-linked (GlcNAc...) asparagine glycan. A helical transmembrane segment spans residues 125–150 (LVKAIYTLGYSVSLMSLATGSIILCL). Residues 151-158 (FRKLHCTR) lie on the Cytoplasmic side of the membrane. A helical transmembrane segment spans residues 159–180 (NYIHLNLFLSFILRAISVLVKD). Residues 181–203 (DVLYSSSGTLHCPDQPSSWVGCK) are Extracellular-facing. The cysteines at positions 202 and 271 are disulfide-linked. The chain crosses the membrane as a helical span at residues 204 to 228 (LSLVFLQYCIMANFFWLLVEGLYLH). Over 229-239 (TLLVAMLPPRR) the chain is Cytoplasmic. The chain crosses the membrane as a helical span at residues 240 to 261 (CFLAYLLIGWGLPTVCIGAWTA). The Extracellular segment spans residues 262–280 (ARLYLEDTGCWDTNDHSVP). The chain crosses the membrane as a helical span at residues 281–304 (WWVIRIPILISIIVNFVLFISIIR). Residues 305–325 (ILLQKLTSPDVGGNDQSQYKR) are Cytoplasmic-facing. A helical transmembrane segment spans residues 326–346 (LAKSTLLLIPLFGVHYMVFAV). Residues 347–354 (FPISISSK) are Extracellular-facing. The chain crosses the membrane as a helical span at residues 355–378 (YQILFELCLGSFQGLVVAVLYCFL). Topologically, residues 379 to 438 (NSEVQCELKRKWRSRCPTPSASRDYRVCGSSFSRNGSEGALQFHRGSRAQSFLQTETSVI) are cytoplasmic.

The protein belongs to the G-protein coupled receptor 2 family. Interacts with ADCYAP1/PACAP (via N-terminal extracellular domain); activated by PACAP27 and CAPAC38 neuropeptides. Interacts with VIP; the interaction results in VIPR1 activation. As to expression, expressed in CD4+ T-cells, but not in CD8+ T-cells. Expressed in the T-cell lines Jurkat, Peer, MOLT-4, HSB, YT and SUP-T1, but not in the T-cell lines HARRIS and HuT 78.

The protein resides in the cell membrane. In terms of biological role, g protein-coupled receptor activated by the neuropeptides vasoactive intestinal peptide (VIP) and pituitary adenylate cyclase-activating polypeptide (ADCYAP1/PACAP). Binds VIP and both PACAP27 and PACAP38 bioactive peptides with the following order of potency PACAP38 = VIP &gt; PACAP27. Ligand binding causes a conformation change that triggers signaling via guanine nucleotide-binding proteins (G proteins) and modulates the activity of downstream effectors. Activates cAMP-dependent pathway. May be coupled to phospholipase C. In Homo sapiens (Human), this protein is Vasoactive intestinal polypeptide receptor 2.